We begin with the raw amino-acid sequence, 662 residues long: Glycogen debranching enzyme (662 aa).

The Nucleophile role is filled by Asp338. The active-site Proton donor is the Glu373.

This sequence belongs to the glycosyl hydrolase 13 family.

The enzyme catalyses Hydrolysis of (1-&gt;6)-alpha-D-glucosidic linkages to branches with degrees of polymerization of three or four glucose residues in limit dextrin.. Its pathway is glycan degradation; glycogen degradation. In terms of biological role, removes maltotriose and maltotetraose chains that are attached by 1,6-alpha-linkage to the limit dextrin main chain, generating a debranched limit dextrin. This chain is Glycogen debranching enzyme, found in Yersinia pestis.